The following is a 262-amino-acid chain: Putative cysteine-rich repeat secretory protein 24 (262 aa).

The first 29 residues, 1-29 (MSLSSSVTKHLISASILAIVAMQLPSVHS), serve as a signal peptide directing secretion. Gnk2-homologous domains follow at residues 39–141 (YLHH…SIYT) and 147–259 (YKNN…LYPF).

The protein belongs to the cysteine-rich repeat secretory protein family.

The protein resides in the secreted. The chain is Putative cysteine-rich repeat secretory protein 24 (CRRSP24) from Arabidopsis thaliana (Mouse-ear cress).